We begin with the raw amino-acid sequence, 459 residues long: Cysteine--tRNA ligase (459 aa).

C28 contacts Zn(2+). Positions 30–40 (VTIYDLCHIGH) match the 'HIGH' region motif. Residues C209, H234, and E238 each contribute to the Zn(2+) site. Positions 266-270 (KMSKS) match the 'KMSKS' region motif. Residue K269 participates in ATP binding.

The protein belongs to the class-I aminoacyl-tRNA synthetase family. Monomer. Zn(2+) is required as a cofactor.

The protein resides in the cytoplasm. It catalyses the reaction tRNA(Cys) + L-cysteine + ATP = L-cysteinyl-tRNA(Cys) + AMP + diphosphate. The protein is Cysteine--tRNA ligase of Shewanella baltica (strain OS155 / ATCC BAA-1091).